Here is a 379-residue protein sequence, read N- to C-terminus: UDP-N-acetylglucosamine--N-acetylmuramyl-(pentapeptide) pyrophosphoryl-undecaprenol N-acetylglucosamine transferase (379 aa).

Residues 19–21, Asn133, Arg174, Ser207, Ile261, and Gln306 each bind UDP-N-acetyl-alpha-D-glucosamine; that span reads TGG.

The protein belongs to the glycosyltransferase 28 family. MurG subfamily.

The protein resides in the cell inner membrane. It catalyses the reaction di-trans,octa-cis-undecaprenyl diphospho-N-acetyl-alpha-D-muramoyl-L-alanyl-D-glutamyl-meso-2,6-diaminopimeloyl-D-alanyl-D-alanine + UDP-N-acetyl-alpha-D-glucosamine = di-trans,octa-cis-undecaprenyl diphospho-[N-acetyl-alpha-D-glucosaminyl-(1-&gt;4)]-N-acetyl-alpha-D-muramoyl-L-alanyl-D-glutamyl-meso-2,6-diaminopimeloyl-D-alanyl-D-alanine + UDP + H(+). It functions in the pathway cell wall biogenesis; peptidoglycan biosynthesis. Cell wall formation. Catalyzes the transfer of a GlcNAc subunit on undecaprenyl-pyrophosphoryl-MurNAc-pentapeptide (lipid intermediate I) to form undecaprenyl-pyrophosphoryl-MurNAc-(pentapeptide)GlcNAc (lipid intermediate II). The protein is UDP-N-acetylglucosamine--N-acetylmuramyl-(pentapeptide) pyrophosphoryl-undecaprenol N-acetylglucosamine transferase of Porphyromonas gingivalis (strain ATCC BAA-308 / W83).